The following is a 337-amino-acid chain: MAKIFYDNDADLSLIQSKKVAIVGYGSQGHAHALNLRDSGVTVIVALPEGSKSRPKAQAAGLQVATVSEAAKAADVIMILAPDTSQARIYNEQIAPHLGPGKTLMFAHGFNIRFNTITPPPSVDVSMIAPKGPGHRVRETFEAGGGVPALLAVHQDASGKAEAQALAYAKGIGATRAGVLLTTFAEETETDLFGEQAVLCGGASELVKAGFETLVNAGYQPEIAYFECLHELKLIVDLMYRGGLNYMRYSISDTAEHGDYVSGPRVITDKTREEMKRILAEIQSGEFARKWIAENEAGRPKFEATRAKEREQRLEIVGANLRKMMPFIDPVTIKPGD.

A KARI N-terminal Rossmann domain is found at 2 to 182 (AKIFYDNDAD…GATRAGVLLT (181 aa)). Residues 25 to 28 (YGSQ), Ser51, Ser53, and 83 to 86 (DTSQ) each bind NADP(+). His108 is a catalytic residue. Gly134 is a binding site for NADP(+). The KARI C-terminal knotted domain occupies 183–328 (TFAEETETDL…ANLRKMMPFI (146 aa)). Positions 191, 195, 227, and 231 each coordinate Mg(2+). Ser252 serves as a coordination point for substrate.

It belongs to the ketol-acid reductoisomerase family. Mg(2+) is required as a cofactor.

It catalyses the reaction (2R)-2,3-dihydroxy-3-methylbutanoate + NADP(+) = (2S)-2-acetolactate + NADPH + H(+). It carries out the reaction (2R,3R)-2,3-dihydroxy-3-methylpentanoate + NADP(+) = (S)-2-ethyl-2-hydroxy-3-oxobutanoate + NADPH + H(+). It functions in the pathway amino-acid biosynthesis; L-isoleucine biosynthesis; L-isoleucine from 2-oxobutanoate: step 2/4. The protein operates within amino-acid biosynthesis; L-valine biosynthesis; L-valine from pyruvate: step 2/4. Its function is as follows. Involved in the biosynthesis of branched-chain amino acids (BCAA). Catalyzes an alkyl-migration followed by a ketol-acid reduction of (S)-2-acetolactate (S2AL) to yield (R)-2,3-dihydroxy-isovalerate. In the isomerase reaction, S2AL is rearranged via a Mg-dependent methyl migration to produce 3-hydroxy-3-methyl-2-ketobutyrate (HMKB). In the reductase reaction, this 2-ketoacid undergoes a metal-dependent reduction by NADPH to yield (R)-2,3-dihydroxy-isovalerate. In Sorangium cellulosum (strain So ce56) (Polyangium cellulosum (strain So ce56)), this protein is Ketol-acid reductoisomerase (NADP(+)).